Consider the following 464-residue polypeptide: L-cystine uptake protein TcyP (464 aa).

10 helical membrane-spanning segments follow: residues 3-23 (TLLV…LYYM), 34-54 (VFTA…IYEP), 73-93 (YVKL…ISAF), 107-127 (GLII…GIAA), 184-204 (PTST…FIGV), 225-245 (IVMR…LALM), 263-283 (FVLA…LLIA), 347-367 (AGIY…IDPL), 371-391 (FILT…GVGG), and 395-415 (FAAL…ALVI).

The protein belongs to the dicarboxylate/amino acid:cation symporter (DAACS) (TC 2.A.23) family.

The protein resides in the membrane. In terms of biological role, mediates uptake of L-cystine, the oxidized form of L-cysteine. This is L-cystine uptake protein TcyP from Bacillus thuringiensis subsp. konkukian (strain 97-27).